We begin with the raw amino-acid sequence, 440 residues long: Inner membrane metabolite transport protein YhjE (440 aa).

Over 1-34 (MQATATTLDHEQEYTPINSRNKVLVASLIGTAIE) the chain is Cytoplasmic. A helical transmembrane segment spans residues 35–55 (FFDFYIYATAAVIVFPHIFFP). The Periplasmic portion of the chain corresponds to 56 to 66 (QGDPTAATLQS). The helical transmembrane segment at 67–87 (LATFAIAFVARPIGSAVFGHF) threads the bilayer. Over 88–108 (GDRVGRKATLVASLLTMGIST) the chain is Cytoplasmic. Helical transmembrane passes span 109–129 (VVIG…LLLA) and 130–150 (LARF…ALLA). Over 151–167 (TENAPPRKRALYGSFPQ) the chain is Cytoplasmic. A helical transmembrane segment spans residues 168-188 (LGAPIGFFFANGTFLLLSWLL). Topologically, residues 189-192 (TDEQ) are periplasmic. A helical transmembrane segment spans residues 193–213 (FMSWGWRVPFIFSAVLVIIGL). The Cytoplasmic segment spans residues 214-248 (YVRVSLHESPVFEKVAKAKKQVKIPLGTLLTKHVR). A helical transmembrane segment spans residues 249 to 269 (VTVLGTFIMLATYTLFYIMTV). Residues 270–289 (YSMTFSTAAAPVGLGLPRNE) are Periplasmic-facing. The chain crosses the membrane as a helical span at residues 290–310 (VLWMLMMAVIGFGVMVPVAGL). Over 311–320 (LADAFGRRKS) the chain is Cytoplasmic. The chain crosses the membrane as a helical span at residues 321–341 (MVIITTLIILFALFAFNPLLG). Residues 342–345 (SGNP) lie on the Periplasmic side of the membrane. The helical transmembrane segment at 346-366 (ILVFAFLLLGLSLMGLTFGPM) threads the bilayer. At 367-384 (GALLPELFPTEVRYTGAS) the chain is on the cytoplasmic side. The helical transmembrane segment at 385–405 (FSYNVASILGASVAPYIAAWL) threads the bilayer. The Periplasmic portion of the chain corresponds to 406 to 410 (QTNYG). Residues 411-431 (LGAVGLYLAAMAGLTLIALLL) form a helical membrane-spanning segment. The Cytoplasmic segment spans residues 432-440 (THETRHQSL).

It belongs to the major facilitator superfamily. Metabolite:H+ Symporter (MHS) family (TC 2.A.1.6) family.

Its subcellular location is the cell inner membrane. In Escherichia coli (strain K12), this protein is Inner membrane metabolite transport protein YhjE (yhjE).